The chain runs to 321 residues: uncharacterized protein (321 aa).

Belongs to the carbohydrate kinase PfkB family.

This is an uncharacterized protein from Escherichia coli (strain K12).